The following is an 853-amino-acid chain: DNA mismatch repair protein MutS (853 aa).

An ATP-binding site is contributed by 614–621 (GPNMGGKS).

The protein belongs to the DNA mismatch repair MutS family.

In terms of biological role, this protein is involved in the repair of mismatches in DNA. It is possible that it carries out the mismatch recognition step. This protein has a weak ATPase activity. The chain is DNA mismatch repair protein MutS from Shigella flexneri serotype 5b (strain 8401).